We begin with the raw amino-acid sequence, 553 residues long: MVRRTHGNSQEHVTKHIFVTGGVVSSLGKGLTASSLGRLLRSRGIHVLQQKLDPYINVDPGTMNPFQHGEVYVTEDGAETDLDIGHYERFLDVFLSQKANVTTGQIYQEVLRKERAGEYLGQCVQVIPHITNEIKSRMRAQASDDVDVIITEIGGTVGDIESQPFLEAAREVRRDLGPDNCMFVHVSLVPYISAAHELKTKPTQHSVMMLRQLGISPDALVLRSDRPLNQSIKDKISLMCDVDAEGVVNCVDAPSIYDVPKILFEEGLDAYVVRELGLPFHDVDWDEWADLLERVHHPKHEVNIAIVGKYIDLPDAYLSVTEAIKAGGFANWAKVNVKWVAADRCETTEGAAAALDNVDGIVIPGGFGIRGIDGKIGALKFARETKLPALGLCLGLQSMVIEYSRHVLGIEDANSSEFEPDCANPVIATMEEQKDIVAGKGDMGHTMRLGSYPAELEEGSLVAELYGTTHVTERHRHRYEVNVAYKDRLREGGLRISGQSPDGELTEFVELPQDVHPFYVATQAHPEFKSRPTKPHPLFAGLVKAALDHQAAR.

Residues 1-278 (MVRRTHGNSQ…DAYVVRELGL (278 aa)) are amidoligase domain. Ser25 contributes to the CTP binding site. Ser25 provides a ligand contact to UTP. ATP-binding positions include 26 to 31 (SLGKGL) and Asp83. Mg(2+) contacts are provided by Asp83 and Glu152. CTP contacts are provided by residues 159–161 (DIE), 199–204 (KTKPTQ), and Lys235. Residues 199–204 (KTKPTQ) and Lys235 each bind UTP. Residues 303-552 (NIAIVGKYID…VKAALDHQAA (250 aa)) enclose the Glutamine amidotransferase type-1 domain. Residue Gly366 participates in L-glutamine binding. The active-site Nucleophile; for glutamine hydrolysis is Cys393. L-glutamine is bound by residues 394–397 (LGLQ), Glu417, and Arg478. Catalysis depends on residues His525 and Glu527.

Belongs to the CTP synthase family. As to quaternary structure, homotetramer.

It catalyses the reaction UTP + L-glutamine + ATP + H2O = CTP + L-glutamate + ADP + phosphate + 2 H(+). The catalysed reaction is L-glutamine + H2O = L-glutamate + NH4(+). The enzyme catalyses UTP + NH4(+) + ATP = CTP + ADP + phosphate + 2 H(+). It functions in the pathway pyrimidine metabolism; CTP biosynthesis via de novo pathway; CTP from UDP: step 2/2. Its activity is regulated as follows. Allosterically activated by GTP, when glutamine is the substrate; GTP has no effect on the reaction when ammonia is the substrate. The allosteric effector GTP functions by stabilizing the protein conformation that binds the tetrahedral intermediate(s) formed during glutamine hydrolysis. Inhibited by the product CTP, via allosteric rather than competitive inhibition. Functionally, catalyzes the ATP-dependent amination of UTP to CTP with either L-glutamine or ammonia as the source of nitrogen. Regulates intracellular CTP levels through interactions with the four ribonucleotide triphosphates. This is CTP synthase from Bifidobacterium longum (strain NCC 2705).